We begin with the raw amino-acid sequence, 378 residues long: Ribosomal RNA large subunit methyltransferase G (378 aa).

Belongs to the methyltransferase superfamily. RlmG family.

The protein resides in the cytoplasm. The enzyme catalyses guanosine(1835) in 23S rRNA + S-adenosyl-L-methionine = N(2)-methylguanosine(1835) in 23S rRNA + S-adenosyl-L-homocysteine + H(+). In terms of biological role, specifically methylates the guanine in position 1835 (m2G1835) of 23S rRNA. The sequence is that of Ribosomal RNA large subunit methyltransferase G from Shigella flexneri.